Consider the following 392-residue polypeptide: MDLYEYQGRDLFERHGLPVLAGGVATTPEEARAIAERLGGRVVVKAQVKVGGRGKAGGVKLTEGAEETVARATDILGMDIKGHTVHKVMITVTADVAEEYYFSYLLDRANRTFLCIASVAGGMDIEQVAAETPEKVVKEPIDANTGVDVATARRIVTQAGFPAEVADQTVEIAVDLWKAFVAEDATLVEVNPLAKTAEGGLLLLDAKVSLDENAAFRHPDHEALVDQAAVDPLEQAAKEKDLNYVKLDGEVGIIGNGAGLVMSTLDVVAYAGERHGGVKPANFLDIGGGASAAVMANGLEIVLSDPAVKSVFVNVFGGITACDAVANGIVQALALLEQRGEKVTRPLVVRLDGNNAEAGRAILDGANNPLIQRVDTMDGAAERAAELAAAGV.

The 228-residue stretch at 9 to 236 (RDLFERHGLP…QAAVDPLEQA (228 aa)) folds into the ATP-grasp domain. Residues K45, 52–54 (GRG), A94, and E99 each bind ATP. N191 and D205 together coordinate Mg(2+). Substrate contacts are provided by residues N256 and 318 to 320 (GIT).

The protein belongs to the succinate/malate CoA ligase beta subunit family. Heterotetramer of two alpha and two beta subunits. The cofactor is Mg(2+).

The enzyme catalyses succinate + ATP + CoA = succinyl-CoA + ADP + phosphate. It carries out the reaction GTP + succinate + CoA = succinyl-CoA + GDP + phosphate. It participates in carbohydrate metabolism; tricarboxylic acid cycle; succinate from succinyl-CoA (ligase route): step 1/1. Functionally, succinyl-CoA synthetase functions in the citric acid cycle (TCA), coupling the hydrolysis of succinyl-CoA to the synthesis of either ATP or GTP and thus represents the only step of substrate-level phosphorylation in the TCA. The beta subunit provides nucleotide specificity of the enzyme and binds the substrate succinate, while the binding sites for coenzyme A and phosphate are found in the alpha subunit. In Salinispora tropica (strain ATCC BAA-916 / DSM 44818 / JCM 13857 / NBRC 105044 / CNB-440), this protein is Succinate--CoA ligase [ADP-forming] subunit beta.